Reading from the N-terminus, the 639-residue chain is Signal recognition particle receptor subunit alpha (639 aa).

A disordered region spans residues 132–317; it reads APTTMKKFED…STKPSATKGT (186 aa). 2 stretches are compositionally biased toward basic and acidic residues: residues 137–146 and 153–165; these read KKFEDSEKAK and IETRGEKPKEKAK. Ser178 is subject to Phosphoserine. The segment covering 204-240 has biased composition (basic and acidic residues); sequence ELSKEEQIRRKREEFIQKHGRGMEKSSKSSKSDAPKE. Thr285 carries the phosphothreonine modification. A phosphoserine mark is found at Ser297, Ser298, and Ser299. The segment covering 305-315 has biased composition (polar residues); sequence AQNSTKPSATK. Residues 420-637 are NG domain; it reads YVVTFCGVNG…NAKAVVAALM (218 aa). 426 to 433 provides a ligand contact to GTP; it reads GVNGVGKS. Phosphoserine is present on Ser474. GTP is bound at residue 521–525; sequence DTAGR. Residue Thr579 is modified to Phosphothreonine. 589–592 serves as a coordination point for GTP; sequence TKFD.

The protein belongs to the GTP-binding SRP family. As to quaternary structure, heterodimer with SRPRB. Interacts with the signal recognition particle (SRP) complex subunit SRP54.

The protein resides in the endoplasmic reticulum membrane. Its function is as follows. Component of the SRP (signal recognition particle) receptor. Ensures, in conjunction with the signal recognition particle, the correct targeting of the nascent secretory proteins to the endoplasmic reticulum membrane system. Forms a guanosine 5'-triphosphate (GTP)-dependent complex with the SRP subunit SRP54. SRP receptor compaction and GTPase rearrangement drive SRP-mediated cotranslational protein translocation into the ER. The chain is Signal recognition particle receptor subunit alpha from Bos taurus (Bovine).